Reading from the N-terminus, the 134-residue chain is ATP synthase epsilon chain (134 aa).

The protein belongs to the ATPase epsilon chain family. F-type ATPases have 2 components, CF(1) - the catalytic core - and CF(0) - the membrane proton channel. CF(1) has five subunits: alpha(3), beta(3), gamma(1), delta(1), epsilon(1). CF(0) has three main subunits: a, b and c.

It localises to the cellular thylakoid membrane. Its function is as follows. Produces ATP from ADP in the presence of a proton gradient across the membrane. This chain is ATP synthase epsilon chain, found in Prochlorococcus marinus (strain MIT 9515).